Reading from the N-terminus, the 992-residue chain is Disks large-associated protein 1 (992 aa).

Disordered stretches follow at residues S154–S209 and K355–V375. S169 is modified (phosphoserine). A compositionally biased stretch (low complexity) spans S195–S209. Phosphoserine occurs at positions 362, 365, 368, 372, 389, 418, 421, 425, 428, 437, 509, 516, and 578. T579 carries the post-translational modification Phosphothreonine. A phosphoserine mark is found at S581 and S605. Position 606 is a phosphothreonine (T606). Residues S608 and S611 each carry the phosphoserine modification. Interaction with DYL2 stretches follow at residues L665–E676 and S687–E698. Residues W914–S980 are disordered. Basic and acidic residues-rich tracts occupy residues D918–A927 and I943–K958. S947 bears the Phosphoserine mark. Positions V969–A978 are enriched in polar residues. The PDZ-binding motif lies at T990–L992.

The protein belongs to the SAPAP family. In terms of assembly, interacts with guanylate kinase-like domain of DLG1, DLG2, DLG3, DLG4 and AIP1. Interacts with the PDZ domain of SHANK1, SHANK2 and SHANK3. Found in a complex with DLG4 and SHANK1, SHANK2 or SHANK3. Found in a complex with DLG4 and BEGAIN. Interacts with DYL2 and LRFN1. Interacts with MPP2 (via the SH3-Guanylate kinase-like sub-module). In terms of processing, ubiquitinated by TRIM3; leading to proteasomal degradation. As to expression, expressed in brain and testis.

It is found in the cell membrane. The protein resides in the postsynaptic density. It localises to the synapse. In terms of biological role, part of the postsynaptic scaffold in neuronal cells. The polypeptide is Disks large-associated protein 1 (Rattus norvegicus (Rat)).